The chain runs to 727 residues: Ubiquitin carboxyl-terminal hydrolase BAP1 (727 aa).

The UCH catalytic domain maps to 4-235 (GWLELESDPG…IRFNLMAVVP (232 aa)). Residues 56–60 (RRSRR) carry the Arg-finger motif motif. C91 (nucleophile) is an active-site residue. The Proton donor role is filled by H169. The interval 273–351 (THKSQESQLP…SLNGVPPTPT (79 aa)) is disordered. A Phosphoserine modification is found at S292. The span at 320–330 (CPQTTTHSPPS) shows a compositional bias: polar residues. Residues 363 to 366 (NHNY) carry the HBM-like motif motif. A phosphoserine mark is found at S369 and S394. Disordered stretches follow at residues 372–435 (QEEE…DGQL) and 462–522 (SIKT…SPVT). Over residues 394-407 (SDDEEDYEDEEEDV) the composition is skewed to acidic residues. Composition is skewed to polar residues over residues 426–435 (SLSNSSDGQL) and 478–522 (THSQ…SPVT). T491 is modified (phosphothreonine). 4 positions are modified to phosphoserine: S519, S535, S583, and S595. The tract at residues 573 to 622 (LTEGGKGSSPSTRSSQGSQGSSSLEEKEVVEVTDSRDKSGLNRSSEPLSG) is disordered. Low complexity predominate over residues 580-595 (SSPSTRSSQGSQGSSS). Residues 594–719 (SSLEEKEVVE…QRKPDRRKRS (126 aa)) form an interaction with BRCA1 region. Residues 596 to 612 (LEEKEVVEVTDSRDKSG) show a composition bias toward basic and acidic residues. A coiled-coil region spans residues 628-659 (KELLALLKCVEAEIANYEACLKEEVEKRKKFK). Residues 640–684 (EIANYEACLKEEVEKRKKFKIDDQRRTHNYDEFICTFISMLAQEG) form an interaction with YY1 region. The ULD domain occupies 668-696 (NYDEFICTFISMLAQEGMLANLVEQNISV). Residues 697–699 (RRR) form an interaction with nucleosomal DNA forming a DNA clamp with ASXL1 region. The short motif at 697 to 720 (RRRQGVSIGRLHKQRKPDRRKRSR) is the Classical bipartite Nuclear localization signal (NLS) element. Residues 702–727 (VSIGRLHKQRKPDRRKRSRPYKAKRQ) form a disordered region. The interval 711–727 (RKPDRRKRSRPYKAKRQ) is positively charged C-terminal extension (CTE). Residues 715-720 (RRKRSR) carry the Nuclear localization signal motif. Residues 715–722 (RRKRSRPY) carry the Non-classical PY-nuclear localization signal (PY-NLS) motif.

This sequence belongs to the peptidase C12 family. BAP1 subfamily. As to quaternary structure, core component of the polycomb repressive deubiquitinase (PR-DUB) complex, at least composed of BAP1, one of ASXL1, ASXL2 or (probably) ASXL3, and one of MBD5 or MBD6. The PR-DUB core associates with a number of accessory proteins, including FOXK1, FOXK2, KDM1B, HCFC1, YY1 and OGT; KDM1B specifically associates with ASXL2 PR-DUB complexes. The BAP1 deubiquitinase activity is not required for PR-DUB assembly. Homodimerize (via coiled-coil hinge-region between the UCH and ULD domains) to mediate assembly of 2 copies of the BAP1-ASXL heterodimer into a bisymmetric tetramer; dimerization enhances association with nucleosomes. The PR-DUB complex associates with nucleosomes to mediate deubiquitination of 'lys-120' of histone H2AK118ub1 substrates; the association requires the positively charged C-terminal tail of BAP1. Interacts (via ULD domain) with ASXL1 (via DEUBAD domain); the interaction is direct and forms a ubiquitin binding cleft. The interaction with ASXL1 stabilizes BAP1 but is not required for nucleosome binding. Associates (via C-terminus) with nucleosome and chromatosome complexes through direct interaction with DNA and the histone3/4 dimer; this association displaces the histone-2A C-terminal tail, extending and orienting the H2AK118ub1 substrate towards the BAP1 deubiquitinase active site. Also interacts (via arginine finger) directly with the histone H2A-H2B acidic patch; this interaction is not critical for nucleosome-chromatosome association but may play a role in orienting the H2AK118ub1 substrate towards the PR-DUB complex active site. Interacts with BRCA1 (via the RING finger). Interacts (via HBM-like motif) with HCFC1. Interacts (via a C-terminal region overlapping the ULD domain) with YY1; the interaction is direct and requires the interaction with HCFC1. Interacts (when phosphorylated at Thr-491) with FOXK1. Interacts (when phosphorylated at Thr-491) with FOXK2; leading to recruitment of the PR-DUB complex and repression of FOXK2 target genes. Interacts (via non-classical PY-NLS) with TNPO1/transportin-1 (via HEAT repeats 8-12); the interaction is direct, mediates BAP1 nuclear localization and disrupts BAP1 homodimerization. Interacts (via C-terminus) with KPNA1/importin alpha5 and KPNA2/importin alpha1; these interactions can contribute to BAP1 nuclear localization but are less important than the interaction with TNPO1/transportin-1. The interaction with TNPO1/transportin-1 disrupts homodimerization and blocks ubiquitination by UBE2O. Post-translationally, ubiquitinated: monoubiquitinated at multiple sites within its nuclear localization signal (NLS) BY UBE2O, leading to cytoplasmic retention. Able to mediate autodeubiquitination via intramolecular interactions to counteract cytoplasmic retention. Monoubiquitinated on at least 4 sites near or within its PY-NLS.

The protein resides in the cytoplasm. The protein localises to the nucleus. It is found in the chromosome. The catalysed reaction is Thiol-dependent hydrolysis of ester, thioester, amide, peptide and isopeptide bonds formed by the C-terminal Gly of ubiquitin (a 76-residue protein attached to proteins as an intracellular targeting signal).. Functionally, deubiquitinating enzyme that plays a key role in chromatin by mediating deubiquitination of histone H2A and HCFC1. Catalytic component of the polycomb repressive deubiquitinase (PR-DUB) complex, a complex that specifically mediates deubiquitination of histone H2A monoubiquitinated at 'Lys-120' (H2AK119ub1). Does not deubiquitinate monoubiquitinated histone H2B. The PR-DUB complex is an epigenetic regulator of gene expression and acts as a transcriptional coactivator, affecting genes involved in development, cell communication, signaling, cell proliferation and cell viability. Antagonizes PRC1 mediated H2AK119ub1 monoubiquitination. As part of the PR-DUB complex, associates with chromatin enriched in histone marks H3K4me1, H3K4me3, and H3K27Ac, but not in H3K27me3. Acts as a regulator of cell growth by mediating deubiquitination of HCFC1 N-terminal and C-terminal chains, with some specificity toward 'Lys-48'-linked polyubiquitin chains compared to 'Lys-63'-linked polyubiquitin chains. Deubiquitination of HCFC1 does not lead to increase stability of HCFC1. Interferes with the BRCA1 and BARD1 heterodimer activity by inhibiting their ability to mediate ubiquitination and autoubiquitination. It however does not mediate deubiquitination of BRCA1 and BARD1. Able to mediate autodeubiquitination via intramolecular interactions to counteract monoubiquitination at the nuclear localization signal (NLS), thereby protecting it from cytoplasmic sequestration. Acts as a tumor suppressor. Negatively regulates epithelial-mesenchymal transition (EMT) of trophoblast stem cells during placental development by regulating genes involved in epithelial cell integrity, cell adhesion and cytoskeletal organization. In Rattus norvegicus (Rat), this protein is Ubiquitin carboxyl-terminal hydrolase BAP1 (Bap1).